Here is an 84-residue protein sequence, read N- to C-terminus: Exodeoxyribonuclease 7 small subunit (84 aa).

Belongs to the XseB family. As to quaternary structure, heterooligomer composed of large and small subunits.

The protein localises to the cytoplasm. The catalysed reaction is Exonucleolytic cleavage in either 5'- to 3'- or 3'- to 5'-direction to yield nucleoside 5'-phosphates.. Its function is as follows. Bidirectionally degrades single-stranded DNA into large acid-insoluble oligonucleotides, which are then degraded further into small acid-soluble oligonucleotides. The sequence is that of Exodeoxyribonuclease 7 small subunit from Yersinia enterocolitica serotype O:8 / biotype 1B (strain NCTC 13174 / 8081).